The sequence spans 205 residues: Small ribosomal subunit protein uS4 (205 aa).

The disordered stretch occupies residues 18–46 (NIWGRPKSPVNRREYGPGQHGQRRKGKLS). The S4 RNA-binding domain occupies 94–157 (RRLDTVVFRA…KQLAIVLEAT (64 aa)).

This sequence belongs to the universal ribosomal protein uS4 family. As to quaternary structure, part of the 30S ribosomal subunit. Contacts protein S5. The interaction surface between S4 and S5 is involved in control of translational fidelity.

One of the primary rRNA binding proteins, it binds directly to 16S rRNA where it nucleates assembly of the body of the 30S subunit. Functionally, with S5 and S12 plays an important role in translational accuracy. The sequence is that of Small ribosomal subunit protein uS4 from Bradyrhizobium sp. (strain BTAi1 / ATCC BAA-1182).